Consider the following 221-residue polypeptide: 7-cyano-7-deazaguanine synthase (221 aa).

10 to 20 (FSGGQDSTTCL) serves as a coordination point for ATP. The Zn(2+) site is built by cysteine 186, cysteine 195, cysteine 198, and cysteine 201.

It belongs to the QueC family. As to quaternary structure, homodimer. Zn(2+) serves as cofactor.

The catalysed reaction is 7-carboxy-7-deazaguanine + NH4(+) + ATP = 7-cyano-7-deazaguanine + ADP + phosphate + H2O + H(+). It participates in purine metabolism; 7-cyano-7-deazaguanine biosynthesis. Functionally, catalyzes the ATP-dependent conversion of 7-carboxy-7-deazaguanine (CDG) to 7-cyano-7-deazaguanine (preQ(0)). In Geobacillus kaustophilus (strain HTA426), this protein is 7-cyano-7-deazaguanine synthase.